The chain runs to 96 residues: MPSRGTRPEDSSVLIPTDNSTPHKEDLSSKIKEQKIVVDELSNLKKNRKVYRQQQNSNIFFLADRTEMLSESKNILDELKKEYQEIENLDKTKIKK.

Residues 1 to 10 (MPSRGTRPED) are compositionally biased toward basic and acidic residues. Residues 1-28 (MPSRGTRPEDSSVLIPTDNSTPHKEDLS) form a disordered region. The stretch at 23–96 (HKEDLSSKIK…ENLDKTKIKK (74 aa)) forms a coiled coil.

In terms of assembly, component of the PAQosome complex which is responsible for the biogenesis of several protein complexes and which consists of R2TP complex members RUVBL1, RUVBL2, RPAP3 and PIH1D1, URI complex members PFDN2, PFDN6, PDRG1, UXT and URI1 as well as ASDURF, POLR2E and DNAAF10/WDR92.

The protein localises to the cytoplasm. In Homo sapiens (Human), this protein is ASNSD1 upstream open reading frame protein.